A 653-amino-acid chain; its full sequence is Intermembrane lipid transfer protein vps13l (653 aa).

The segment at 5–49 (ISELKCQQHDKLVTIYCCACDAYFCKKCDKEKHSQDDNQEDSLHI) adopts a B box-type zinc-finger fold. Positions 10, 13, 32, and 37 each coordinate Zn(2+). Disordered stretches follow at residues 159-232 (NLID…NRKK), 248-420 (HILN…EDDS), and 627-653 (EKSN…PNEN). Residues 195 to 213 (SPSPSRSSESNSTTNNNNN) show a composition bias toward low complexity. A compositionally biased stretch (acidic residues) spans 266 to 277 (DYDDDDDNDDDN). Positions 278–293 (NNNNNNNNNNNNNNNN) are enriched in low complexity. Residues 314 to 330 (ETEKEIENVENKIDNKP) show a composition bias toward basic and acidic residues. Residues 366 to 381 (IFEEEEEEEEDEDEVG) are compositionally biased toward acidic residues.

It belongs to the VPS13 family.

The protein resides in the membrane. Mediates the transfer of lipids between membranes at organelle contact sites. This Dictyostelium discoideum (Social amoeba) protein is Intermembrane lipid transfer protein vps13l (vps13l).